A 196-amino-acid chain; its full sequence is Ribosomal RNA small subunit methyltransferase G (196 aa).

Residues G77, F82, 127–128 (AE), and R140 contribute to the S-adenosyl-L-methionine site.

The protein belongs to the methyltransferase superfamily. RNA methyltransferase RsmG family.

The protein resides in the cytoplasm. Specifically methylates the N7 position of a guanine in 16S rRNA. In Aquifex aeolicus (strain VF5), this protein is Ribosomal RNA small subunit methyltransferase G.